A 163-amino-acid chain; its full sequence is Large ribosomal subunit protein bL17 (163 aa).

The tract at residues 127–163 (VAKKATRTRRSKKSAEAAAPAAVEAPATEEPKAESAE) is disordered. Residues 129–138 (KKATRTRRSK) show a composition bias toward basic residues. The span at 142–154 (EAAAPAAVEAPAT) shows a compositional bias: low complexity.

This sequence belongs to the bacterial ribosomal protein bL17 family. In terms of assembly, part of the 50S ribosomal subunit. Contacts protein L32.

The sequence is that of Large ribosomal subunit protein bL17 from Bacteroides thetaiotaomicron (strain ATCC 29148 / DSM 2079 / JCM 5827 / CCUG 10774 / NCTC 10582 / VPI-5482 / E50).